A 203-amino-acid chain; its full sequence is MVKVKICGLRRKEDIEYANELKPDYVGFVFAKSKRQIEVEQALDLISLLDKEIKTVGVFVNEPVENALKIAQTLNLDVLQFHGDETQDYIDNFKNFTVWKAIRIKDKEDLEKTKQFKVNSFVFDTLTKNEYGGTGKTFNWKVLKGMELNVPIILAGGLNENNVEEAIKIVDPYAVDVSSGVETEGYKDFKKLKSFIEKVRGIR.

This sequence belongs to the TrpF family.

The catalysed reaction is N-(5-phospho-beta-D-ribosyl)anthranilate = 1-(2-carboxyphenylamino)-1-deoxy-D-ribulose 5-phosphate. It participates in amino-acid biosynthesis; L-tryptophan biosynthesis; L-tryptophan from chorismate: step 3/5. This Thermoanaerobacter pseudethanolicus (strain ATCC 33223 / 39E) (Clostridium thermohydrosulfuricum) protein is N-(5'-phosphoribosyl)anthranilate isomerase.